The following is a 293-amino-acid chain: Pantothenate synthetase (293 aa).

Residue 30-37 (MGYLHKGH) participates in ATP binding. The active-site Proton donor is H37. Q61 is a binding site for (R)-pantoate. Residue Q61 coordinates beta-alanine. Residue 147-150 (GEKD) coordinates ATP. Position 153 (Q153) interacts with (R)-pantoate. ATP-binding positions include V176 and 184-187 (CSSR).

The protein belongs to the pantothenate synthetase family. As to quaternary structure, homodimer.

It localises to the cytoplasm. The catalysed reaction is (R)-pantoate + beta-alanine + ATP = (R)-pantothenate + AMP + diphosphate + H(+). Its pathway is cofactor biosynthesis; (R)-pantothenate biosynthesis; (R)-pantothenate from (R)-pantoate and beta-alanine: step 1/1. Functionally, catalyzes the condensation of pantoate with beta-alanine in an ATP-dependent reaction via a pantoyl-adenylate intermediate. The sequence is that of Pantothenate synthetase from Brucella canis (strain ATCC 23365 / NCTC 10854 / RM-666).